A 342-amino-acid chain; its full sequence is UDP-N-acetylglucosamine--N-acetylmuramyl-(pentapeptide) pyrophosphoryl-undecaprenol N-acetylglucosamine transferase (342 aa).

Residues 10 to 12 (TGG), Asn124, Ser177, and Gln275 each bind UDP-N-acetyl-alpha-D-glucosamine.

This sequence belongs to the glycosyltransferase 28 family. MurG subfamily.

Its subcellular location is the cell inner membrane. The catalysed reaction is di-trans,octa-cis-undecaprenyl diphospho-N-acetyl-alpha-D-muramoyl-L-alanyl-D-glutamyl-meso-2,6-diaminopimeloyl-D-alanyl-D-alanine + UDP-N-acetyl-alpha-D-glucosamine = di-trans,octa-cis-undecaprenyl diphospho-[N-acetyl-alpha-D-glucosaminyl-(1-&gt;4)]-N-acetyl-alpha-D-muramoyl-L-alanyl-D-glutamyl-meso-2,6-diaminopimeloyl-D-alanyl-D-alanine + UDP + H(+). Its pathway is cell wall biogenesis; peptidoglycan biosynthesis. Cell wall formation. Catalyzes the transfer of a GlcNAc subunit on undecaprenyl-pyrophosphoryl-MurNAc-pentapeptide (lipid intermediate I) to form undecaprenyl-pyrophosphoryl-MurNAc-(pentapeptide)GlcNAc (lipid intermediate II). In Campylobacter jejuni subsp. doylei (strain ATCC BAA-1458 / RM4099 / 269.97), this protein is UDP-N-acetylglucosamine--N-acetylmuramyl-(pentapeptide) pyrophosphoryl-undecaprenol N-acetylglucosamine transferase.